A 240-amino-acid polypeptide reads, in one-letter code: uncharacterized protein (240 aa).

The next 3 membrane-spanning stretches (helical) occupy residues 12–32 (ICIH…ILMS), 66–86 (IQVL…FVLV), and 89–109 (ISGY…IYFF). 2 N-linked (GlcNAc...) asparagine; by host glycosylation sites follow: Asn-129 and Asn-157.

Its subcellular location is the membrane. This is an uncharacterized protein from Acanthamoeba polyphaga mimivirus (APMV).